The primary structure comprises 128 residues: DNA-directed RNA polymerase subunit omega (128 aa).

Belongs to the RNA polymerase subunit omega family. The RNAP catalytic core consists of 2 alpha, 1 beta, 1 beta' and 1 omega subunit. When a sigma factor is associated with the core the holoenzyme is formed, which can initiate transcription.

It carries out the reaction RNA(n) + a ribonucleoside 5'-triphosphate = RNA(n+1) + diphosphate. Its function is as follows. Promotes RNA polymerase assembly. Latches the N- and C-terminal regions of the beta' subunit thereby facilitating its interaction with the beta and alpha subunits. The sequence is that of DNA-directed RNA polymerase subunit omega from Neorickettsia sennetsu (strain ATCC VR-367 / Miyayama) (Ehrlichia sennetsu).